The primary structure comprises 91 residues: Ribonuclease P protein component 4 (91 aa).

Zn(2+) is bound by residues Cys55, Cys58, Cys78, and Cys81.

This sequence belongs to the eukaryotic/archaeal RNase P protein component 4 family. As to quaternary structure, consists of a catalytic RNA component and at least 4-5 protein subunits. Zn(2+) is required as a cofactor.

Its subcellular location is the cytoplasm. It catalyses the reaction Endonucleolytic cleavage of RNA, removing 5'-extranucleotides from tRNA precursor.. Part of ribonuclease P, a protein complex that generates mature tRNA molecules by cleaving their 5'-ends. This chain is Ribonuclease P protein component 4, found in Thermoplasma acidophilum (strain ATCC 25905 / DSM 1728 / JCM 9062 / NBRC 15155 / AMRC-C165).